Reading from the N-terminus, the 827-residue chain is Spastin (827 aa).

Residues 1 to 13 show a composition bias toward polar residues; the sequence is MVRNKYTLTTAGK. Positions 1–58 are disordered; it reads MVRNKYTLTTAGKSPSKKSRTGSLSKQHDATGDDDGETGTLDGSGSAAGSPVGGGTDA. Residues 1–79 lie on the Cytoplasmic side of the membrane; sequence MVRNKYTLTT…KQNLYIISFP (79 aa). Residues 38-50 are compositionally biased toward low complexity; the sequence is TGTLDGSGSAAGS. The segment at residues 80-100 is an intramembrane region (helical); it reads VIFVFNVLRSLLYQLFIVFRY. Residues 101-827 are Cytoplasmic-facing; sequence VYNFTTKVVY…WLQDFGDVTL (727 aa). Disordered regions lie at residues 127-190 and 207-229; these read QHGH…AHPL and SIQRSASGSQVGPGDPLLAKQKH. The segment covering 129–141 has biased composition (basic residues); that stretch reads GHHHHHHHRHSSH. The segment covering 142 to 190 has biased composition (low complexity); it reads SIHSTAAAHQLQQHQQQQQHQYSLLQQEQHGVTEPQQQQQQQHQAAHPL. The MIT domain maps to 231–306; it reads HRRAFEYISK…SMARDRLQFL (76 aa). 3 disordered regions span residues 358 to 381, 398 to 433, and 476 to 526; these read HHPARGTAASSRPTTAATAPATPS, VGYKRPGNLGVMNKSQTLPRSMGGTRTTPTGTGGAG, and VSIP…PQIS. Residues 364 to 381 are compositionally biased toward low complexity; sequence TAASSRPTTAATAPATPS. Composition is skewed to low complexity over residues 476–486 and 510–524; these read VSIPIPGSSPV and QQPQQPQQQQQQQPQ. 592–599 contacts ATP; the sequence is GPPGNGKT.

The protein belongs to the AAA ATPase family. Spastin subfamily. Homohexamer. The homohexamer is stabilized by ATP-binding. The homohexamer may adopt a ring conformation through which microtubules pass prior to being severed. Interacts with microtubules.

The protein localises to the membrane. The protein resides in the cytoplasm. It is found in the cytoskeleton. Its subcellular location is the microtubule organizing center. It localises to the centrosome. The catalysed reaction is n ATP + n H2O + a microtubule = n ADP + n phosphate + (n+1) alpha/beta tubulin heterodimers.. ATP-dependent microtubule severing protein. Microtubule severing may promote reorganization of cellular microtubule arrays and the release of microtubules from the microtubule organizing center following nucleation. In Anopheles gambiae (African malaria mosquito), this protein is Spastin (spas).